A 538-amino-acid polypeptide reads, in one-letter code: Nicotinate phosphoribosyltransferase (538 aa).

Nicotinate contacts are provided by Tyr21 and Thr210. His213 carries the phosphohistidine modification. Arg318 serves as a coordination point for nicotinate. Residue Thr380 coordinates 5-phospho-alpha-D-ribose 1-diphosphate.

It belongs to the NAPRTase family. As to quaternary structure, homodimer. The cofactor is Mg(2+). It depends on Mn(2+) as a cofactor. Post-translationally, transiently phosphorylated on a His residue during the reaction cycle. Phosphorylation strongly increases the affinity for substrates and increases the rate of nicotinate D-ribonucleotide production. Dephosphorylation regenerates the low-affinity form of the enzyme, leading to product release.

It is found in the cytoplasm. The protein localises to the cytosol. The enzyme catalyses nicotinate + 5-phospho-alpha-D-ribose 1-diphosphate + ATP + H2O = nicotinate beta-D-ribonucleotide + ADP + phosphate + diphosphate. It participates in cofactor biosynthesis; NAD(+) biosynthesis; nicotinate D-ribonucleotide from nicotinate: step 1/1. Functionally, catalyzes the first step in the biosynthesis of NAD from nicotinic acid, the ATP-dependent synthesis of beta-nicotinate D-ribonucleotide from nicotinate and 5-phospho-D-ribose 1-phosphate. Helps prevent cellular oxidative stress via its role in NAD biosynthesis. The polypeptide is Nicotinate phosphoribosyltransferase (Naprt) (Rattus norvegicus (Rat)).